The chain runs to 344 residues: 4-dimethylallyltryptophan N-methyltransferase easF (344 aa).

It belongs to the methyltransferase superfamily. As to quaternary structure, homodimer.

The catalysed reaction is 4-(3-methylbut-2-enyl)-L-tryptophan + S-adenosyl-L-methionine = 4-(3-methylbut-2-enyl)-L-abrine + S-adenosyl-L-homocysteine + H(+). It participates in alkaloid biosynthesis; ergot alkaloid biosynthesis. Functionally, 4-dimethylallyltryptophan N-methyltransferase; part of the gene cluster that mediates the biosynthesis of fungal ergot alkaloid. DmaW catalyzes the first step of ergot alkaloid biosynthesis by condensing dimethylallyl diphosphate (DMAP) and tryptophan to form 4-dimethylallyl-L-tryptophan. The second step is catalyzed by the methyltransferase easF that methylates 4-dimethylallyl-L-tryptophan in the presence of S-adenosyl-L-methionine, resulting in the formation of 4-dimethylallyl-L-abrine. The catalase easC and the FAD-dependent oxidoreductase easE then transform 4-dimethylallyl-L-abrine to chanoclavine-I which is further oxidized by easD in the presence of NAD(+), resulting in the formation of chanoclavine-I aldehyde. Agroclavine dehydrogenase easG then mediates the conversion of chanoclavine-I aldehyde to agroclavine via a non-enzymatic adduct reaction: the substrate is an iminium intermediate that is formed spontaneously from chanoclavine-I aldehyde in the presence of glutathione. The presence of easA is not required to complete this reaction. Further conversion of agroclavine to paspalic acid is a two-step process involving oxidation of agroclavine to elymoclavine and of elymoclavine to paspalic acid, the second step being performed by the elymoclavine oxidase cloA. Paspalic acid is then further converted to D-lysergic acid. Ergopeptines are assembled from D-lysergic acid and three different amino acids by the D-lysergyl-peptide-synthetases composed each of a monomudular and a trimodular nonribosomal peptide synthetase subunit. LpsB and lpsC encode the monomodular subunits responsible for D-lysergic acid activation and incorporation into the ergopeptine backbone. LpsA1 and A2 subunits encode the trimodular nonribosomal peptide synthetase assembling the tripeptide portion of ergopeptines. LpsA1 is responsible for formation of the major ergopeptine, ergotamine, and lpsA2 for alpha-ergocryptine, the minor ergopeptine of the total alkaloid mixture elaborated by C.purpurea. D-lysergyl-tripeptides are assembled by the nonribosomal peptide synthetases and released as N-(D-lysergyl-aminoacyl)-lactams. Cyclolization of the D-lysergyl-tripeptides is performed by the Fe(2+)/2-ketoglutarate-dependent dioxygenase easH which introduces a hydroxyl group into N-(D-lysergyl-aminoacyl)-lactam at alpha-C of the aminoacyl residue followed by spontaneous condensation with the terminal lactam carbonyl group. The chain is 4-dimethylallyltryptophan N-methyltransferase easF from Claviceps purpurea (strain 20.1) (Ergot fungus).